The primary structure comprises 337 residues: Phosphate acyltransferase (337 aa).

It belongs to the PlsX family. In terms of assembly, homodimer. Probably interacts with PlsY.

It is found in the cytoplasm. It carries out the reaction a fatty acyl-[ACP] + phosphate = an acyl phosphate + holo-[ACP]. Its pathway is lipid metabolism; phospholipid metabolism. In terms of biological role, catalyzes the reversible formation of acyl-phosphate (acyl-PO(4)) from acyl-[acyl-carrier-protein] (acyl-ACP). This enzyme utilizes acyl-ACP as fatty acyl donor, but not acyl-CoA. The sequence is that of Phosphate acyltransferase from Listeria welshimeri serovar 6b (strain ATCC 35897 / DSM 20650 / CCUG 15529 / CIP 8149 / NCTC 11857 / SLCC 5334 / V8).